The following is a 562-amino-acid chain: Glutamine--tRNA ligase (562 aa).

Positions Pro-35 to His-45 match the 'HIGH' region motif. Residues Glu-36–Asn-38 and His-42–Ser-48 contribute to the ATP site. Positions 68 and 213 each coordinate L-glutamine. ATP is bound by residues Thr-232 and Arg-264 to Leu-265. A 'KMSKS' region motif is present at residues Ile-271–Arg-275.

The protein belongs to the class-I aminoacyl-tRNA synthetase family. In terms of assembly, monomer.

It localises to the cytoplasm. The catalysed reaction is tRNA(Gln) + L-glutamine + ATP = L-glutaminyl-tRNA(Gln) + AMP + diphosphate. This chain is Glutamine--tRNA ligase, found in Neisseria gonorrhoeae (strain ATCC 700825 / FA 1090).